Here is a 118-residue protein sequence, read N- to C-terminus: Small ribosomal subunit protein uS13 (118 aa).

A disordered region spans residues 94-118; sequence SLPLRGQRTKTNARTRKGPRKPIKK.

Belongs to the universal ribosomal protein uS13 family. Part of the 30S ribosomal subunit. Forms a loose heterodimer with protein S19. Forms two bridges to the 50S subunit in the 70S ribosome.

In terms of biological role, located at the top of the head of the 30S subunit, it contacts several helices of the 16S rRNA. In the 70S ribosome it contacts the 23S rRNA (bridge B1a) and protein L5 of the 50S subunit (bridge B1b), connecting the 2 subunits; these bridges are implicated in subunit movement. Contacts the tRNAs in the A and P-sites. The polypeptide is Small ribosomal subunit protein uS13 (Aliivibrio fischeri (strain ATCC 700601 / ES114) (Vibrio fischeri)).